A 329-amino-acid polypeptide reads, in one-letter code: Phosphate acyltransferase (329 aa).

It belongs to the PlsX family. As to quaternary structure, homodimer. Probably interacts with PlsY.

Its subcellular location is the cytoplasm. The enzyme catalyses a fatty acyl-[ACP] + phosphate = an acyl phosphate + holo-[ACP]. The protein operates within lipid metabolism; phospholipid metabolism. Catalyzes the reversible formation of acyl-phosphate (acyl-PO(4)) from acyl-[acyl-carrier-protein] (acyl-ACP). This enzyme utilizes acyl-ACP as fatty acyl donor, but not acyl-CoA. The protein is Phosphate acyltransferase of Shouchella clausii (strain KSM-K16) (Alkalihalobacillus clausii).